Consider the following 623-residue polypeptide: ATP-dependent lipid A-core flippase (623 aa).

Transmembrane regions (helical) follow at residues leucine 66 to isoleucine 86, valine 103 to phenylalanine 123, leucine 190 to isoleucine 210, leucine 290 to leucine 310, and alanine 317 to isoleucine 337. The 283-residue stretch at valine 67–lysine 349 folds into the ABC transmembrane type-1 domain. The ABC transporter domain occupies valine 382 to methionine 618. Glycine 416–threonine 423 is an ATP binding site.

It belongs to the ABC transporter superfamily. Lipid exporter (TC 3.A.1.106) family. In terms of assembly, homodimer.

The protein resides in the cell inner membrane. The enzyme catalyses ATP + H2O + lipid A-core oligosaccharideSide 1 = ADP + phosphate + lipid A-core oligosaccharideSide 2.. Its function is as follows. Involved in lipopolysaccharide (LPS) biosynthesis. Translocates lipid A-core from the inner to the outer leaflet of the inner membrane. Transmembrane domains (TMD) form a pore in the inner membrane and the ATP-binding domain (NBD) is responsible for energy generation. This is ATP-dependent lipid A-core flippase from Bordetella pertussis (strain Tohama I / ATCC BAA-589 / NCTC 13251).